Reading from the N-terminus, the 83-residue chain is MAGPWTLEPGKNYGGIPTWAWPRSTTVHVQVVGGGNGRVRFQAGASPDEDNDVNGETSFSRSFGGFRLNVTNIGSTTLKVWTA.

This is an uncharacterized protein from Dictyostelium discoideum (Social amoeba).